The sequence spans 280 residues: Band 7 protein AGAP004871 (280 aa).

A helical membrane pass occupies residues 23–43; sequence ILIFLSWVLVVLTMPFSLLVC.

The protein belongs to the band 7/mec-2 family.

It localises to the membrane. The polypeptide is Band 7 protein AGAP004871 (Anopheles gambiae (African malaria mosquito)).